The sequence spans 120 residues: NAD(P)H-quinone oxidoreductase subunit 3, chloroplastic (120 aa).

3 helical membrane passes run 14–34, 64–84, and 88–108; these read LIISILIPILAFLISGILAPI, MFALVFVVFDVETVFLYPWAM, and VLGVSVFIEALIFVLILIVGS.

It belongs to the complex I subunit 3 family. In terms of assembly, NDH is composed of at least 16 different subunits, 5 of which are encoded in the nucleus.

The protein localises to the plastid. The protein resides in the chloroplast thylakoid membrane. The catalysed reaction is a plastoquinone + NADH + (n+1) H(+)(in) = a plastoquinol + NAD(+) + n H(+)(out). It carries out the reaction a plastoquinone + NADPH + (n+1) H(+)(in) = a plastoquinol + NADP(+) + n H(+)(out). NDH shuttles electrons from NAD(P)H:plastoquinone, via FMN and iron-sulfur (Fe-S) centers, to quinones in the photosynthetic chain and possibly in a chloroplast respiratory chain. The immediate electron acceptor for the enzyme in this species is believed to be plastoquinone. Couples the redox reaction to proton translocation, and thus conserves the redox energy in a proton gradient. This chain is NAD(P)H-quinone oxidoreductase subunit 3, chloroplastic, found in Cicer arietinum (Chickpea).